Reading from the N-terminus, the 423-residue chain is Hemoglobinase (423 aa).

The N-terminal stretch at 1 to 18 is a signal peptide; sequence MFYSIFFIHILRIVLVDC. A propeptide spanning residues 19–29 is cleaved from the precursor; it reads NEYSEENVDDR. Active-site residues include histidine 145 and cysteine 186. The tract at residues 286–307 is disordered; sequence RKKASTEHDEPPMKPKDSIPSR. A propeptide spanning residues 286–423 is cleaved from the precursor; the sequence is RKKASTEHDE…INGVIRKVCG (138 aa). The span at 289 to 305 shows a compositional bias: basic and acidic residues; the sequence is ASTEHDEPPMKPKDSIP.

It belongs to the peptidase C13 family. Gut.

The enzyme catalyses Hydrolysis of proteins and small molecule substrates at -Asn-|-Xaa- bonds.. Its function is as follows. This protease is used by the parasite for degradation of the host globin. The polypeptide is Hemoglobinase (HAEM) (Schistosoma japonicum (Blood fluke)).